A 249-amino-acid polypeptide reads, in one-letter code: MADKKEVIQNWPLETGDYAVGNVESPVAVVSLGSNMNDELVAAGAAISGPLHTENLGIEKVVANIISNSNIRYVLICGSEVQGHITGKTVEALYENGIDEEKKSIIGSPGAIPFVENLPVEAVERFQKQVSIVSMINNEDVSEISSKIDECISNDPGAYDEDAMIVEFNETPEEEFEVDEVTFSDDSAVDLASIVLLEVENRISMMNNEIKQIASLEKISSGYYAGKIEGIVIGFILTLVFLIIIIQGL.

Topologically, residues 1 to 227 (MADKKEVIQN…KISSGYYAGK (227 aa)) are cytoplasmic. H84 serves as a coordination point for 5-hydroxybenzimidazolylcob(I)amide. The chain crosses the membrane as a helical span at residues 228-248 (IEGIVIGFILTLVFLIIIIQG). Residue L249 is a topological domain, extracellular.

This sequence belongs to the MtrA family. As to quaternary structure, the complex is composed of 8 subunits; MtrA, MtrB, MtrC, MtrD, MtrE, MtrF, MtrG and MtrH. 5-hydroxybenzimidazolylcob(I)amide is required as a cofactor.

The protein resides in the cell membrane. It carries out the reaction 5-methyl-5,6,7,8-tetrahydromethanopterin + coenzyme M + 2 Na(+)(in) = 5,6,7,8-tetrahydromethanopterin + methyl-coenzyme M + 2 Na(+)(out). It functions in the pathway one-carbon metabolism; methanogenesis from CO(2); methyl-coenzyme M from 5,10-methylene-5,6,7,8-tetrahydromethanopterin: step 2/2. In terms of biological role, part of a complex that catalyzes the formation of methyl-coenzyme M and tetrahydromethanopterin from coenzyme M and methyl-tetrahydromethanopterin. This is an energy-conserving, sodium-ion translocating step. The polypeptide is Tetrahydromethanopterin S-methyltransferase subunit A (Methanosphaera stadtmanae (strain ATCC 43021 / DSM 3091 / JCM 11832 / MCB-3)).